The chain runs to 559 residues: Malate synthase, glyoxysomal (559 aa).

The Proton acceptor role is filled by arginine 173. Aspartate 459 serves as the catalytic Proton donor. Positions 557-559 (CKL) match the Microbody targeting signal motif.

This sequence belongs to the malate synthase family.

It localises to the glyoxysome. The enzyme catalyses glyoxylate + acetyl-CoA + H2O = (S)-malate + CoA + H(+). It participates in carbohydrate metabolism; glyoxylate cycle; (S)-malate from isocitrate: step 2/2. This chain is Malate synthase, glyoxysomal (LIP), found in Zea mays (Maize).